The sequence spans 339 residues: Uroporphyrinogen decarboxylase (339 aa).

Residues 23-27 (RQAGR), Asp-72, Tyr-147, Thr-202, and His-315 contribute to the substrate site.

It belongs to the uroporphyrinogen decarboxylase family. In terms of assembly, homodimer.

It localises to the cytoplasm. The enzyme catalyses uroporphyrinogen III + 4 H(+) = coproporphyrinogen III + 4 CO2. It functions in the pathway porphyrin-containing compound metabolism; protoporphyrin-IX biosynthesis; coproporphyrinogen-III from 5-aminolevulinate: step 4/4. Catalyzes the decarboxylation of four acetate groups of uroporphyrinogen-III to yield coproporphyrinogen-III. This chain is Uroporphyrinogen decarboxylase, found in Citrifermentans bemidjiense (strain ATCC BAA-1014 / DSM 16622 / JCM 12645 / Bem) (Geobacter bemidjiensis).